The following is a 94-amino-acid chain: Acylphosphatase (94 aa).

The 88-residue stretch at 7 to 94 (RLTARITGVV…GEFDDFRIID (88 aa)) folds into the Acylphosphatase-like domain. Residues Arg22 and Asn40 contribute to the active site.

Belongs to the acylphosphatase family.

The catalysed reaction is an acyl phosphate + H2O = a carboxylate + phosphate + H(+). This chain is Acylphosphatase (acyP), found in Paenarthrobacter aurescens (strain TC1).